Consider the following 114-residue polypeptide: Histone H2B (114 aa).

The segment at 1–22 is disordered; that stretch reads MAKTPSKKAAKAPKKAGSKRNK. Position 3 is an N6-acetyllysine (lysine 3). Lysine 110 participates in a covalent cross-link: Glycyl lysine isopeptide (Lys-Gly) (interchain with G-Cter in ubiquitin).

The protein belongs to the histone H2B family. The nucleosome is a histone octamer containing two molecules each of H2A, H2B, H3 and H4 assembled in one H3-H4 heterotetramer and two H2A-H2B heterodimers. The octamer wraps approximately 147 bp of DNA. In terms of processing, monoubiquitination of Lys-110 gives a specific tag for epigenetic transcriptional activation and is also prerequisite for histone H3 'Lys-4' and 'Lys-79' methylation.

It localises to the nucleus. Its subcellular location is the chromosome. In terms of biological role, core component of nucleosome. Nucleosomes wrap and compact DNA into chromatin, limiting DNA accessibility to the cellular machineries which require DNA as a template. Histones thereby play a central role in transcription regulation, DNA repair, DNA replication and chromosomal stability. DNA accessibility is regulated via a complex set of post-translational modifications of histones, also called histone code, and nucleosome remodeling. This chain is Histone H2B, found in Olisthodiscus luteus (Marine phytoflagellate).